The sequence spans 367 residues: Peptide chain release factor 2 (367 aa).

Glutamine 250 carries the N5-methylglutamine modification.

This sequence belongs to the prokaryotic/mitochondrial release factor family. In terms of processing, methylated by PrmC. Methylation increases the termination efficiency of RF2.

The protein localises to the cytoplasm. Functionally, peptide chain release factor 2 directs the termination of translation in response to the peptide chain termination codons UGA and UAA. The chain is Peptide chain release factor 2 from Chloroflexus aggregans (strain MD-66 / DSM 9485).